Here is a 319-residue protein sequence, read N- to C-terminus: Free fatty acid receptor 3 (319 aa).

At M1–S15 the chain is on the extracellular side. A helical membrane pass occupies residues V16–V36. Residues G37 to P43 lie on the Cytoplasmic side of the membrane. The chain crosses the membrane as a helical span at residues V44–L64. Residues P65 to T98 lie on the Extracellular side of the membrane. C84 and C165 are oxidised to a cystine. Residues S99–Y119 traverse the membrane as a helical segment. The Cytoplasmic segment spans residues K120–Q127. The chain crosses the membrane as a helical span at residues A128–I148. Residues T149–E183 are Extracellular-facing. N-linked (GlcNAc...) asparagine glycosylation is found at N154 and N162. A helical transmembrane segment spans residues M184–I206. Topologically, residues L207–R218 are cytoplasmic. Residues I219–M239 form a helical membrane-spanning segment. The Extracellular segment spans residues S240–R254. A helical transmembrane segment spans residues S255 to S275. The Cytoplasmic segment spans residues S276–S319.

It belongs to the G-protein coupled receptor 1 family. As to expression, expressed in white adipose tissue and skeletal muscle (at protein level). Abundantly expressed in sympathetic ganglia such as the superior cervical ganglion. Also expressed by intestinal endocrine cells.

It localises to the cell membrane. Its function is as follows. G protein-coupled receptor that is activated by a major product of dietary fiber digestion, the short chain fatty acids (SCFAs), and that plays a role in the regulation of whole-body energy homeostasis and in intestinal immunity. In omnivorous mammals, the short chain fatty acids acetate, propionate and butyrate are produced primarily by the gut microbiome that metabolizes dietary fibers. SCFAs serve as a source of energy but also act as signaling molecules. That G protein-coupled receptor is probably coupled to the pertussis toxin-sensitive, G(i/o)-alpha family of G proteins. Its activation results in the formation of inositol 1,4,5-trisphosphate, the mobilization of intracellular calcium, the phosphorylation of the MAPK3/ERK1 and MAPK1/ERK2 kinases and the inhibition of intracellular cAMP accumulation. Activated by SCFAs and by beta-hydroxybutyrate, a ketone body produced by the liver upon starvation, it inhibits N-type calcium channels and modulates the activity of sympathetic neurons through a signaling cascade involving the beta and gamma subunits of its coupled G protein, phospholipase C and MAP kinases. Thereby, it may regulate energy expenditure through the control of the sympathetic nervous system that controls for instance heart rate. Upon activation by SCFAs accumulating in the intestine, it may also signal to the brain via neural circuits which in turn would regulate intestinal gluconeogenesis. May also control the production of hormones involved in whole-body energy homeostasis. May for instance, regulate blood pressure through renin secretion. May also regulate secretion of the PYY peptide by enteroendocrine cells and control gut motility, intestinal transit rate, and the harvesting of energy from SCFAs produced by gut microbiota. May also indirectly regulate the production of LEP/Leptin, a hormone acting on the CNS to inhibit food intake, in response to the presence of short-chain fatty acids in the intestine. Finally, may also play a role in glucose homeostasis. Besides its role in energy homeostasis, may play a role in intestinal immunity. May mediate the activation of the inflammatory and immune response by SCFAs in the gut, regulating the rapid production of chemokines and cytokines by intestinal epithelial cells. Exhibits an SCFA-independent constitutive G protein-coupled receptor activity. The chain is Free fatty acid receptor 3 (Ffar3) from Mus musculus (Mouse).